The primary structure comprises 233 residues: uncharacterized protein (233 aa).

7 residues coordinate Zn(2+): His-64, His-66, Asp-68, His-69, His-143, Asp-162, and His-212.

The protein belongs to the metallo-beta-lactamase superfamily. Glyoxalase II family. Requires Zn(2+) as cofactor.

This is an uncharacterized protein from Bacillus subtilis (strain 168).